The sequence spans 294 residues: Ribosomal protein L11 methyltransferase (294 aa).

Residues threonine 146, glycine 167, aspartate 189, and asparagine 231 each contribute to the S-adenosyl-L-methionine site.

It belongs to the methyltransferase superfamily. PrmA family.

It localises to the cytoplasm. It carries out the reaction L-lysyl-[protein] + 3 S-adenosyl-L-methionine = N(6),N(6),N(6)-trimethyl-L-lysyl-[protein] + 3 S-adenosyl-L-homocysteine + 3 H(+). In terms of biological role, methylates ribosomal protein L11. The polypeptide is Ribosomal protein L11 methyltransferase (Aliivibrio salmonicida (strain LFI1238) (Vibrio salmonicida (strain LFI1238))).